The following is a 473-amino-acid chain: Cysteine--tRNA ligase (473 aa).

C28 serves as a coordination point for Zn(2+). The 'HIGH' region motif lies at 30–40; that stretch reads MTVYDFCHIGH. Residues C212, H237, and E241 each coordinate Zn(2+). A 'KMSKS' region motif is present at residues 277–281; that stretch reads KMSKS. K280 serves as a coordination point for ATP.

The protein belongs to the class-I aminoacyl-tRNA synthetase family. Monomer. Requires Zn(2+) as cofactor.

It localises to the cytoplasm. It catalyses the reaction tRNA(Cys) + L-cysteine + ATP = L-cysteinyl-tRNA(Cys) + AMP + diphosphate. The chain is Cysteine--tRNA ligase from Polynucleobacter asymbioticus (strain DSM 18221 / CIP 109841 / QLW-P1DMWA-1) (Polynucleobacter necessarius subsp. asymbioticus).